Here is a 266-residue protein sequence, read N- to C-terminus: Cyclin-C (266 aa).

A Cyclin N-terminal domain is found at 47–151 (IIQVLGEQLK…LLENLDCCLI (105 aa)).

This sequence belongs to the cyclin family. Cyclin C subfamily. Component of the Cdk8 module of the Mediator complex.

It localises to the nucleus. Component of the Mediator complex, a coactivator involved in regulated gene transcription of nearly all RNA polymerase II-dependent genes. Mediator functions as a bridge to convey information from gene-specific regulatory proteins to the basal RNA polymerase II transcription machinery. Mediator is recruited to promoters by direct interactions with regulatory proteins and serves as a scaffold for the assembly of a functional preinitiation complex with RNA polymerase II and the general transcription factors. Binds to and activates cyclin-dependent kinase Cdk8 that phosphorylates the CTD (C-terminal domain) of the large subunit of RNA polymerase II (RNAp II), which may inhibit the formation of a transcription initiation complex. The protein is Cyclin-C (CycC) of Anopheles gambiae (African malaria mosquito).